A 262-amino-acid chain; its full sequence is Urease accessory protein UreD (262 aa).

It belongs to the UreD family. In terms of assembly, ureD, UreF and UreG form a complex that acts as a GTP-hydrolysis-dependent molecular chaperone, activating the urease apoprotein by helping to assemble the nickel containing metallocenter of UreC. The UreE protein probably delivers the nickel.

It is found in the cytoplasm. Its function is as follows. Required for maturation of urease via the functional incorporation of the urease nickel metallocenter. The sequence is that of Urease accessory protein UreD from Acetivibrio thermocellus (strain ATCC 27405 / DSM 1237 / JCM 9322 / NBRC 103400 / NCIMB 10682 / NRRL B-4536 / VPI 7372) (Clostridium thermocellum).